The following is a 94-amino-acid chain: PTS system galactitol-specific EIIB component (94 aa).

A PTS EIIB type-2 domain is found at 1-94; sequence MKRKIIVACG…QNKILTILQG (94 aa). Catalysis depends on cysteine 9, which acts as the Phosphocysteine intermediate; for EIIB activity. Phosphocysteine; by EIIA is present on cysteine 9.

Forms a complex with one each of subunit of GatA, GatB and 2 subunits of GatC.

The protein localises to the cytoplasm. The enzyme catalyses galactitol(out) + N(pros)-phospho-L-histidyl-[protein] = galactitol 1-phosphate(in) + L-histidyl-[protein]. In terms of biological role, the phosphoenolpyruvate-dependent sugar phosphotransferase system (PTS), a major carbohydrate active transport system, catalyzes the phosphorylation of incoming sugar substrates concomitant with their translocation across the cell membrane. The enzyme II complex composed of GatA, GatB and GatC is involved in galactitol transport. The polypeptide is PTS system galactitol-specific EIIB component (gatB) (Escherichia coli O157:H7).